The sequence spans 246 residues: MTDSDNPRRVLLKLSGEAFGGGKVGIDTQVIRRIAEEIVPAVQQGVQVAIVVGGGNFFRGAELQQAGIDRSRGDYMGMLGTVMNCLALQDFLEQEGQATRVQTAITMGQVAEPYIPLKAIRHLEKGRVVIFGAGAGMPYFSTDTVSIQRSLEIHCDEVLMGKNGVDGVYTADPRKDENAKRFETLSYNRALVDNLAVMDASALSMARDNKKRIRVFGLEEPGNVTRALVGDEIGTLVSTAESRVAE.

13–16 (KLSG) provides a ligand contact to ATP. Gly-54 is a UMP binding site. ATP is bound by residues Gly-55 and Arg-59. Residues Asp-74 and 135-142 (AGMPYFST) contribute to the UMP site. Asn-163, Tyr-169, and Asp-172 together coordinate ATP.

This sequence belongs to the UMP kinase family. In terms of assembly, homohexamer.

Its subcellular location is the cytoplasm. It carries out the reaction UMP + ATP = UDP + ADP. Its pathway is pyrimidine metabolism; CTP biosynthesis via de novo pathway; UDP from UMP (UMPK route): step 1/1. Its activity is regulated as follows. Inhibited by UTP. Its function is as follows. Catalyzes the reversible phosphorylation of UMP to UDP. The protein is Uridylate kinase of Bifidobacterium longum (strain NCC 2705).